Here is a 182-residue protein sequence, read N- to C-terminus: MAREAKGPKEGDFITIKSYKHDGSLHRTWRDTMVLKTSENVLIGCNDHTLVTEDDGRRWVTREPAIVYFHKHYWFNIVAMIRDNGVSYYCNLASPYVLDKEALKYIDYDLDVKVFPDGERRLLDVDEYEEHGAQWRYSADTDRILKANVKVLVDWIKNKKGPFSQDYIDIWYSRYQELSRRQ.

Arginine 27 acts as the Proton donor in catalysis. Asparagine 91, aspartate 107, aspartate 109, aspartate 111, aspartate 124, and glutamate 127 together coordinate Mg(2+).

The protein belongs to the Ntdp family. Mg(2+) serves as cofactor.

It carries out the reaction a ribonucleoside 5'-triphosphate + H2O = a ribonucleoside 5'-diphosphate + phosphate + H(+). The enzyme catalyses a ribonucleoside 5'-diphosphate + H2O = a ribonucleoside 5'-phosphate + phosphate + H(+). Functionally, has nucleoside phosphatase activity towards nucleoside triphosphates and nucleoside diphosphates. This chain is Nucleoside triphosphate/diphosphate phosphatase, found in Lactiplantibacillus plantarum (strain ATCC BAA-793 / NCIMB 8826 / WCFS1) (Lactobacillus plantarum).